The following is a 360-amino-acid chain: Phenylalanine--tRNA ligase alpha subunit (360 aa).

Glutamate 260 provides a ligand contact to Mg(2+).

It belongs to the class-II aminoacyl-tRNA synthetase family. Phe-tRNA synthetase alpha subunit type 1 subfamily. In terms of assembly, tetramer of two alpha and two beta subunits. The cofactor is Mg(2+).

The protein localises to the cytoplasm. It catalyses the reaction tRNA(Phe) + L-phenylalanine + ATP = L-phenylalanyl-tRNA(Phe) + AMP + diphosphate + H(+). This chain is Phenylalanine--tRNA ligase alpha subunit, found in Sinorhizobium medicae (strain WSM419) (Ensifer medicae).